Here is a 559-residue protein sequence, read N- to C-terminus: NAD(P)H-quinone oxidoreductase chain 4-2 (559 aa).

14 consecutive transmembrane segments (helical) span residues 5–25 (FPWLTTMIALPLVAALFIPLI), 35–55 (WYALGVGLADFVLMSYVFWTN), 86–106 (ISMPLVLLAGLVTTLSIFAAW), 114–134 (LFYFLMLVLYAAQIGVFVAQD), 136–156 (LLLFIMWELELVPVYLLVCIW), 168–188 (FLLYTAAASVFILVAALGLAF), 207–227 (IALELFLYAGLLIAFGVKLAI), 242–262 (SAPVSMILAGVLLKMGGYGLI), 274–294 (VYFAPILVILGVVNIIYGGFS), 310–330 (VSHMGFVLLGIASFTDLGISG), 331–351 (AMLQMLSHGLIAAVLFFLAGV), 374–394 (VFALFTMGAMASLALPGMSGF), 417–437 (VTVFLAAVGLVLTPIYLLSML), and 488–508 (VFIAACFLLPIIAVGLYPKLA).

Belongs to the complex I subunit 4 family.

The protein localises to the cellular thylakoid membrane. The catalysed reaction is a plastoquinone + NADH + (n+1) H(+)(in) = a plastoquinol + NAD(+) + n H(+)(out). The enzyme catalyses a plastoquinone + NADPH + (n+1) H(+)(in) = a plastoquinol + NADP(+) + n H(+)(out). In terms of biological role, NDH-1 shuttles electrons from NAD(P)H, via FMN and iron-sulfur (Fe-S) centers, to quinones in the respiratory chain. The immediate electron acceptor for the enzyme in this species is believed to be plastoquinone. Couples the redox reaction to proton translocation (for every two electrons transferred, four hydrogen ions are translocated across the cytoplasmic membrane), and thus conserves the redox energy in a proton gradient. The protein is NAD(P)H-quinone oxidoreductase chain 4-2 (ndhD2) of Synechocystis sp. (strain ATCC 27184 / PCC 6803 / Kazusa).